The sequence spans 297 residues: Bifunctional protein FolD (297 aa).

Residues G167 to S169 and I233 contribute to the NADP(+) site.

The protein belongs to the tetrahydrofolate dehydrogenase/cyclohydrolase family. In terms of assembly, homodimer.

It carries out the reaction (6R)-5,10-methylene-5,6,7,8-tetrahydrofolate + NADP(+) = (6R)-5,10-methenyltetrahydrofolate + NADPH. It catalyses the reaction (6R)-5,10-methenyltetrahydrofolate + H2O = (6R)-10-formyltetrahydrofolate + H(+). It functions in the pathway one-carbon metabolism; tetrahydrofolate interconversion. Functionally, catalyzes the oxidation of 5,10-methylenetetrahydrofolate to 5,10-methenyltetrahydrofolate and then the hydrolysis of 5,10-methenyltetrahydrofolate to 10-formyltetrahydrofolate. This chain is Bifunctional protein FolD, found in Zymomonas mobilis subsp. mobilis (strain ATCC 31821 / ZM4 / CP4).